Consider the following 614-residue polypeptide: Threonine--tRNA ligase (614 aa).

An editing domain region spans residues 1–138 (MRILTIHARK…PLSELSKTIR (138 aa)). Catalytic stretches follow at residues 195–492 (NRVN…PYIP) and 196–492 (RVND…PYIP). C289, H340, and H461 together coordinate Zn(2+).

This sequence belongs to the class-II aminoacyl-tRNA synthetase family. Homodimer. It depends on Zn(2+) as a cofactor.

The protein resides in the cytoplasm. It carries out the reaction tRNA(Thr) + L-threonine + ATP = L-threonyl-tRNA(Thr) + AMP + diphosphate + H(+). In terms of biological role, catalyzes the attachment of threonine to tRNA(Thr) in a two-step reaction: L-threonine is first activated by ATP to form Thr-AMP and then transferred to the acceptor end of tRNA(Thr). Also edits incorrectly charged L-seryl-tRNA(Thr). This chain is Threonine--tRNA ligase, found in Staphylothermus marinus (strain ATCC 43588 / DSM 3639 / JCM 9404 / F1).